Reading from the N-terminus, the 824-residue chain is Glycophorin-binding protein 130 (824 aa).

A PEXEL motif motif is present at residues 84-88 (RILAE). Disordered stretches follow at residues 97 to 236 (EKTT…GQIM), 258 to 291 (NTDP…EYAS), 310 to 334 (DPND…PEGQ), 358 to 384 (NTDP…PEGQ), 408 to 431 (NTDP…SDPE), 457 to 482 (NTDP…DPEG), 507 to 532 (NTDP…DPEG), 559 to 582 (DPND…DPEG), 659 to 683 (DPND…PEGQ), 711 to 733 (NDEV…PEGQ), and 759 to 783 (DPND…PEGQ). Basic and acidic residues-rich tracts occupy residues 117–140 (TKKD…SEKQ) and 174–198 (KKEE…EPKA). A compositionally biased stretch (polar residues) spans 200–228 (KVSQKPSTSTRSNNEVKIRAASNQETLTS). GBP repeat units follow at residues 226–275 (LTSA…NKED), 276–325 (LTSA…NKED), 326–375 (LTSA…NKED), 376–424 (LTSA…DNKE), 425–474 (LTSS…NKED), 475–524 (LTSA…NKED), 525–574 (LTSA…NKED), 575–624 (LTSA…NKEE), 625–674 (LTSS…NKED), 675–724 (LTSA…NKED), 725–774 (LTSA…NKED), and 775–824 (LTSA…NNEA). Composition is skewed to basic and acidic residues over residues 264-276 (EVER…KEDL), 314-326 (DVER…KEDL), 364-376 (EVER…KEDL), 414-426 (EVER…KELT), 463-475 (EVER…KEDL), 513-525 (EVER…KEDL), 563-575 (EVER…KEDL), 663-675 (EVER…KEDL), 713-725 (EVER…KEDL), and 763-775 (DVER…KEDL).

Interacts with host glycophorin.

The protein localises to the secreted. Its subcellular location is the cell surface. It is found in the host cytoplasm. In terms of biological role, involved in merozoite invasion of host erythrocytes. The protein is Glycophorin-binding protein 130 of Plasmodium falciparum (isolate 3D7).